Consider the following 1309-residue polypeptide: Putative receptor-type tyrosine-protein phosphatase mosPTP-1 (1309 aa).

The N-terminal stretch at 1 to 36 (MNSAPRNAGAARSVDRRGFIAACGLLVLLVVRMLGA) is a signal peptide. The Extracellular portion of the chain corresponds to 37–572 (ADATRIFDIE…RQVYDDYNLA (536 aa)). N-linked (GlcNAc...) asparagine glycans are attached at residues Asn-60, Asn-107, Asn-162, Asn-257, Asn-353, Asn-389, Asn-455, Asn-501, and Asn-513. Fibronectin type-III domains are found at residues 147–244 (PPGR…TLRE), 249–347 (KPVT…DEGV), 350–449 (KPLN…SGPS), and 450–553 (APKV…LQLH). A helical transmembrane segment spans residues 573–593 (VLGGIVFSCFGLLLIVLSFLL). Residues 594-1309 (WKKCFHAAYY…NHLNLDHNQS (716 aa)) lie on the Cytoplasmic side of the membrane. Tyrosine-protein phosphatase domains follow at residues 656-921 (FSKE…LVEA) and 944-1196 (IDNQ…LSYM). Cys-862 acts as the Phosphocysteine intermediate in catalysis. A disordered region spans residues 1239–1269 (NSGDGGGNGNDGVPTGNGTNGGLPMSGGGTT). Positions 1256 to 1268 (GTNGGLPMSGGGT) are enriched in gly residues.

The protein belongs to the protein-tyrosine phosphatase family. Receptor class subfamily. As to quaternary structure, interacts with C-type lectin mosGCTL-1; the interaction probably mediates the recruitment of West Nile virus particles in complex with C-type lectin mosGCTL-1 to the cell surface. Interacts with C-type lectin mosGCTL-7; the interaction probably mediates the recruitment of Japanese encephalitis virus particles in complex with C-type lectin mosGCTL-7 to the cell surface. In terms of tissue distribution, salivary gland (at protein level). Hemolymph. Low-level expression in midgut.

It localises to the cell membrane. It carries out the reaction O-phospho-L-tyrosyl-[protein] + H2O = L-tyrosyl-[protein] + phosphate. Putative protein tyrosine-protein phosphatase. Its function is as follows. (Microbial infection) Facilitates West Nile virus infection in mosquitoes probably via recruiting West Nile virus particles in complex with C-type lectin mosGCTL-1 to the cell surface. Functionally, (Microbial infection) Facilitates Japanese encephalitis virus infection in mosquitoes probably via recruiting Japanese encephalitis virus particles in complex with C-type lectin mosGCTL-7 to the cell surface. This chain is Putative receptor-type tyrosine-protein phosphatase mosPTP-1, found in Aedes aegypti (Yellowfever mosquito).